The following is a 150-amino-acid chain: Transcriptional regulator MraZ (150 aa).

SpoVT-AbrB domains lie at 9–54 (QSIH…PPEE) and 83–126 (AEEC…NKST).

It belongs to the MraZ family. As to quaternary structure, forms oligomers.

The protein resides in the cytoplasm. It is found in the nucleoid. The chain is Transcriptional regulator MraZ from Syntrophobacter fumaroxidans (strain DSM 10017 / MPOB).